A 366-amino-acid polypeptide reads, in one-letter code: tRNA pseudouridine synthase B (366 aa).

The active-site Nucleophile is the Asp44.

Belongs to the pseudouridine synthase TruB family. Type 1 subfamily.

It catalyses the reaction uridine(55) in tRNA = pseudouridine(55) in tRNA. Its function is as follows. Responsible for synthesis of pseudouridine from uracil-55 in the psi GC loop of transfer RNAs. This is tRNA pseudouridine synthase B from Treponema pallidum (strain Nichols).